A 1270-amino-acid polypeptide reads, in one-letter code: Microtubule-associated tumor suppressor 1 (1270 aa).

Over residues 1-14 (MTDDNSDDKIEDEL) the composition is skewed to acidic residues. 2 disordered regions span residues 1–50 (MTDD…NSAN) and 184–236 (FHTA…VTPS). Residues 38-50 (NSSASSVNWNSAN) are compositionally biased toward low complexity. Threonine 186 carries the phosphothreonine modification. Residues 197-211 (SGSTSSLSYSTWTSS) show a composition bias toward low complexity. Positions 212–228 (HSDKTHARETTYDRESF) are enriched in basic and acidic residues. A phosphoserine mark is found at serine 381, serine 399, and serine 443. 2 disordered regions span residues 524-560 (DAAL…PRSD) and 592-622 (THSK…SSSN). Residues 533–556 (RPQQTSASSPSSVNSRQQTVLSRT) are compositionally biased toward polar residues. The residue at position 629 (serine 629) is a Phosphoserine. 3 stretches are compositionally biased toward polar residues: residues 701 to 710 (SKTTTTSGRN), 759 to 776 (VSSS…SSWV), and 797 to 815 (TGST…TYSN). The segment at 701-815 (SKTTTTSGRN…THSELSTYSN (115 aa)) is disordered. Residues 940 to 1231 (IQHLLSEREE…RLSMENEELL (292 aa)) are a coiled coil. Phosphoserine is present on residues serine 1203, serine 1224, serine 1245, serine 1255, serine 1259, serine 1261, serine 1264, and serine 1268. A disordered region spans residues 1237 to 1270 (GDLCSPKRSPTSSAIPLQSPRNSGSFPSPSISPR). Polar residues predominate over residues 1244 to 1270 (RSPTSSAIPLQSPRNSGSFPSPSISPR).

Belongs to the MTUS1 family. As to quaternary structure, homodimer. Interacts with AGTR2. Interacts with PTPN6. Isoform 1 associates with microtubules. Ubiquitously expressed (at protein level). Highly expressed in brain. Down-regulated in ovarian carcinoma, pancreas carcinoma, colon carcinoma and head and neck squamous cell carcinoma (HNSCC). Isoform 1 is the major isoform in most peripheral tissues. Isoform 2 is abundant in most peripheral tissues. Isoform 3 is the major isoform in brain, female reproductive tissues, thyroid and heart. Within brain it is highly expressed in corpus callosum and pons. Isoform 6 is brain-specific, it is the major isoform in cerebellum and fetal brain.

The protein localises to the mitochondrion. It localises to the golgi apparatus. Its subcellular location is the cell membrane. The protein resides in the nucleus. It is found in the cytoplasm. The protein localises to the cytoskeleton. It localises to the microtubule organizing center. Its subcellular location is the centrosome. The protein resides in the spindle. In terms of biological role, cooperates with AGTR2 to inhibit ERK2 activation and cell proliferation. May be required for AGTR2 cell surface expression. Together with PTPN6, induces UBE2V2 expression upon angiotensin-II stimulation. Isoform 1 inhibits breast cancer cell proliferation, delays the progression of mitosis by prolonging metaphase and reduces tumor growth. In Homo sapiens (Human), this protein is Microtubule-associated tumor suppressor 1 (MTUS1).